The sequence spans 219 residues: OVARIAN TUMOR DOMAIN-containing deubiquitinating enzyme 12 (219 aa).

The OTU domain maps to 79–203 (LCELKVSGDG…EVHYNSLYDI (125 aa)). The active site involves D87. The active-site Nucleophile is the C90. The active site involves H196.

This sequence belongs to the peptidase C85 family.

The catalysed reaction is Thiol-dependent hydrolysis of ester, thioester, amide, peptide and isopeptide bonds formed by the C-terminal Gly of ubiquitin (a 76-residue protein attached to proteins as an intracellular targeting signal).. Functionally, hydrolase that can remove conjugated ubiquitin from proteins in vitro and may therefore play an important regulatory role at the level of protein turnover by preventing degradation. Inactive cysteine protease. This chain is OVARIAN TUMOR DOMAIN-containing deubiquitinating enzyme 12, found in Arabidopsis thaliana (Mouse-ear cress).